A 516-amino-acid chain; its full sequence is Probable 2-methylcitrate dehydratase (516 aa).

The protein belongs to the PrpD family.

It carries out the reaction (2S,3S)-2-methylcitrate = 2-methyl-cis-aconitate + H2O. Its pathway is organic acid metabolism; propanoate degradation. Its function is as follows. Catalyzes the stereospecific dehydration of (2S,3S)-2-methylcitrate (2-MC) to yield the cis isomer of 2-methyl-aconitate. The sequence is that of Probable 2-methylcitrate dehydratase (PDH1) from Saccharomyces cerevisiae (strain ATCC 204508 / S288c) (Baker's yeast).